The chain runs to 126 residues: Aspartate 1-decarboxylase (126 aa).

Serine 25 serves as the catalytic Schiff-base intermediate with substrate; via pyruvic acid. Serine 25 is modified (pyruvic acid (Ser)). Threonine 57 is a substrate binding site. Tyrosine 58 acts as the Proton donor in catalysis. 73-75 (GGA) lines the substrate pocket.

Belongs to the PanD family. In terms of assembly, heterooctamer of four alpha and four beta subunits. Requires pyruvate as cofactor. Is synthesized initially as an inactive proenzyme, which is activated by self-cleavage at a specific serine bond to produce a beta-subunit with a hydroxyl group at its C-terminus and an alpha-subunit with a pyruvoyl group at its N-terminus.

It is found in the cytoplasm. The catalysed reaction is L-aspartate + H(+) = beta-alanine + CO2. Its pathway is cofactor biosynthesis; (R)-pantothenate biosynthesis; beta-alanine from L-aspartate: step 1/1. Its function is as follows. Catalyzes the pyruvoyl-dependent decarboxylation of aspartate to produce beta-alanine. In Stenotrophomonas maltophilia (strain R551-3), this protein is Aspartate 1-decarboxylase.